A 797-amino-acid polypeptide reads, in one-letter code: Calcium-transporting ATPase CtpE (797 aa).

The next 3 membrane-spanning stretches (helical) occupy residues 55 to 75 (LLLIVLATGSLINGMFGLLII), 215 to 235 (ILQFITYLLVPAGLLTIYTQL), and 254 to 274 (VPMVPEGLVLMTSIAFAVGVV). The active-site 4-aspartylphosphate intermediate is D301. Mg(2+)-binding residues include D301, T303, and D536. 6 helical membrane passes run 601–621 (TVYSVLLALLVGIECLIAIPL), 633–653 (IHVTIAAWFTIGIPAFILSLA), 667–687 (VMTSAVPFGLVIGVATFVTYL), 703–723 (ASTAALITLLMTALWVLAVIA), 729–749 (WRLALVLPSGLAYVVIFSLPL), and 764–784 (TSIALAVGVVGAATIEAMWWI).

It belongs to the cation transport ATPase (P-type) (TC 3.A.3) family.

It localises to the cell membrane. The catalysed reaction is Ca(2+)(in) + ATP + H2O = Ca(2+)(out) + ADP + phosphate + H(+). P-type ATPase involved in specific uptake of calcium. This Mycobacterium tuberculosis (strain CDC 1551 / Oshkosh) protein is Calcium-transporting ATPase CtpE (ctpE).